A 273-amino-acid chain; its full sequence is Eukaryotic translation initiation factor 3 subunit G-2 (273 aa).

Residues 193-271 enclose the RRM domain; that stretch reads SAVRISNLSE…LILCVEWSKP (79 aa).

The protein belongs to the eIF-3 subunit G family. As to quaternary structure, component of the eukaryotic translation initiation factor 3 (eIF-3) complex. The eIF-3 complex interacts with pix.

Its subcellular location is the cytoplasm. RNA-binding component of the eukaryotic translation initiation factor 3 (eIF-3) complex, which is involved in protein synthesis of a specialized repertoire of mRNAs and, together with other initiation factors, stimulates binding of mRNA and methionyl-tRNAi to the 40S ribosome. The eIF-3 complex specifically targets and initiates translation of a subset of mRNAs involved in cell proliferation. This subunit can bind 18S rRNA. This Drosophila simulans (Fruit fly) protein is Eukaryotic translation initiation factor 3 subunit G-2.